The chain runs to 79 residues: NADH-ubiquinone oxidoreductase chain 4 (79 aa).

2 helical membrane-spanning segments follow: residues 24–44 (SYTL…LANI) and 54–74 (LLIN…WFLL).

Belongs to the complex I subunit 4 family.

The protein resides in the mitochondrion membrane. The catalysed reaction is a ubiquinone + NADH + 5 H(+)(in) = a ubiquinol + NAD(+) + 4 H(+)(out). Core subunit of the mitochondrial membrane respiratory chain NADH dehydrogenase (Complex I) that is believed to belong to the minimal assembly required for catalysis. Complex I functions in the transfer of electrons from NADH to the respiratory chain. The immediate electron acceptor for the enzyme is believed to be ubiquinone. This chain is NADH-ubiquinone oxidoreductase chain 4 (ND4), found in Simulium vittatum (Striped black fly).